Reading from the N-terminus, the 37-residue chain is FAIGAIIKKFGKKLVEYAVKHKDLYAPYIKKHLCEKL.

Belongs to the ectatomin family. Ectatomin-Eq subfamily. Heterodimer of subunits A and B; disulfide-linked. Expressed by the venom gland.

It is found in the secreted. The protein resides in the target cell membrane. The polypeptide is U1-ectatotoxin-Eb1a subunit B (Ectatomma brunneum (Ant)).